The sequence spans 863 residues: Penicillin-binding protein 1A (863 aa).

Over 1-28 the chain is Cytoplasmic; sequence MTENRDNKTSQSEKTTQKKKKKKFKAFK. Residues 29 to 49 form a helical; Signal-anchor for type II membrane protein membrane-spanning segment; it reads IILITFITLIVISLVTAIGIT. The Extracellular portion of the chain corresponds to 50–863; the sequence is LAIIKTSPDI…KPIIRPKKHF (814 aa). Positions 71–248 are transglycosylase; sequence SKIYDDKGEL…PSVYYPYSRT (178 aa). The active-site Proton donor; for transglycosylase activity is the Glu110. Residues 392-674 form a transpeptidase region; it reads ASAVLTDYHT…AAALFGKIMN (283 aa). Ser431 functions as the Acyl-ester intermediate; for transpeptidase activity in the catalytic mechanism. Residues 774-863 are disordered; that stretch reads DDDMYVLPDK…KPIIRPKKHF (90 aa). Positions 808 to 836 are enriched in polar residues; that stretch reads EDATNEASTEPSPNTDTVPEDSTNNLDPT. The segment covering 837 to 846 has biased composition (basic and acidic residues); sequence KNTEKKPSDK. Basic residues predominate over residues 847–863; sequence KNKKHVIKPIIRPKKHF.

This sequence in the N-terminal section; belongs to the glycosyltransferase 51 family. The protein in the C-terminal section; belongs to the transpeptidase family.

The protein resides in the cell membrane. The catalysed reaction is [GlcNAc-(1-&gt;4)-Mur2Ac(oyl-L-Ala-gamma-D-Glu-L-Lys-D-Ala-D-Ala)](n)-di-trans,octa-cis-undecaprenyl diphosphate + beta-D-GlcNAc-(1-&gt;4)-Mur2Ac(oyl-L-Ala-gamma-D-Glu-L-Lys-D-Ala-D-Ala)-di-trans,octa-cis-undecaprenyl diphosphate = [GlcNAc-(1-&gt;4)-Mur2Ac(oyl-L-Ala-gamma-D-Glu-L-Lys-D-Ala-D-Ala)](n+1)-di-trans,octa-cis-undecaprenyl diphosphate + di-trans,octa-cis-undecaprenyl diphosphate + H(+). It carries out the reaction Preferential cleavage: (Ac)2-L-Lys-D-Ala-|-D-Ala. Also transpeptidation of peptidyl-alanyl moieties that are N-acyl substituents of D-alanine.. It participates in cell wall biogenesis; peptidoglycan biosynthesis. Functionally, cell wall formation. Synthesis of cross-linked peptidoglycan from the lipid intermediates. The enzyme has a penicillin-insensitive transglycosylase N-terminal domain (formation of linear glycan strands) and a penicillin-sensitive transpeptidase C-terminal domain (cross-linking of the peptide subunits). This is Penicillin-binding protein 1A (pbpA) from Clostridium novyi (strain NT).